A 142-amino-acid chain; its full sequence is MRHYETMFILKPTLVEEEIKSKIEFYKEVITKHHGVIETSLDMGMRNLAYEIKKHKRGYYYVAYFKAEPSMILELERLYRINEDVLRFIVIKYESKKEVEAWHALVDRANKKPSHAKEKHEKTEHTHSHHLEEAESVGSHSE.

Positions 110 to 133 (NKKPSHAKEKHEKTEHTHSHHLEE) are enriched in basic and acidic residues. The segment at 110–142 (NKKPSHAKEKHEKTEHTHSHHLEEAESVGSHSE) is disordered.

It belongs to the bacterial ribosomal protein bS6 family.

Functionally, binds together with bS18 to 16S ribosomal RNA. The chain is Small ribosomal subunit protein bS6 from Helicobacter pylori (strain HPAG1).